We begin with the raw amino-acid sequence, 295 residues long: Protoheme IX farnesyltransferase 2 (295 aa).

9 helical membrane-spanning segments follow: residues 9-29 (ITKP…FFLA), 36-56 (FALF…GCVF), 83-103 (LPLA…LLYV), 108-128 (LSAF…SLWL), 135-155 (GTLV…CAVS), 163-183 (VTLL…IAIF), 209-229 (IVLY…GGYA), 230-250 (GLGY…MAWG), and 264-284 (VFGF…VDSQ).

It belongs to the UbiA prenyltransferase family. Protoheme IX farnesyltransferase subfamily.

The protein resides in the cell inner membrane. It carries out the reaction heme b + (2E,6E)-farnesyl diphosphate + H2O = Fe(II)-heme o + diphosphate. It participates in porphyrin-containing compound metabolism; heme O biosynthesis; heme O from protoheme: step 1/1. Converts heme B (protoheme IX) to heme O by substitution of the vinyl group on carbon 2 of heme B porphyrin ring with a hydroxyethyl farnesyl side group. This chain is Protoheme IX farnesyltransferase 2, found in Pseudomonas putida (strain ATCC 47054 / DSM 6125 / CFBP 8728 / NCIMB 11950 / KT2440).